A 557-amino-acid chain; its full sequence is Hepatocyte nuclear factor 1-beta (557 aa).

A dimerization region spans residues 1-31; the sequence is MVSKLTSLQQELLSALLSSGVTKEVLVQALE. One can recognise an HNF-p1 domain in the interval 1 to 32; that stretch reads MVSKLTSLQQELLSALLSSGVTKEVLVQALEE. A phosphoserine mark is found at serine 49, serine 52, serine 75, and serine 80. A disordered region spans residues 64–85; sequence TLTNGHAKGRLSGDEGSEDGDD. A POU-specific atypical domain is found at 93 to 188; it reads KELQALNTEE…ILRQFNQTVQ (96 aa). The segment at residues 231-311 is a DNA-binding region (homeobox; HNF1-type); it reads MRRNRFKWGP…NRRKEEAFRQ (81 aa). The interval 324-352 is disordered; sequence HSLNPLLSHGSPHHQPSSSPPNKLSGVRY. Positions 328 to 344 are enriched in low complexity; sequence PLLSHGSPHHQPSSSPP.

This sequence belongs to the HNF1 homeobox family. In terms of assembly, binds DNA as a dimer. Can form homodimer or heterodimer with HNF1-alpha. Interacts (via HNF-p1 domain) with PCBD1; the interaction increases its transactivation activity.

The protein resides in the nucleus. Its function is as follows. Transcription factor that binds to the inverted palindrome 5'-GTTAATNATTAAC-3'. Binds to the FPC element in the cAMP regulatory unit of the PLAU gene. Transcriptional activity is increased by coactivator PCBD1. This Homo sapiens (Human) protein is Hepatocyte nuclear factor 1-beta (HNF1B).